A 397-amino-acid chain; its full sequence is Ribosomal RNA large subunit methyltransferase I (397 aa).

Positions alanine 2 to phenylalanine 80 constitute a PUA domain.

Belongs to the methyltransferase superfamily. RlmI family.

The protein resides in the cytoplasm. It catalyses the reaction cytidine(1962) in 23S rRNA + S-adenosyl-L-methionine = 5-methylcytidine(1962) in 23S rRNA + S-adenosyl-L-homocysteine + H(+). Its function is as follows. Specifically methylates the cytosine at position 1962 (m5C1962) of 23S rRNA. The polypeptide is Ribosomal RNA large subunit methyltransferase I (Shewanella denitrificans (strain OS217 / ATCC BAA-1090 / DSM 15013)).